The chain runs to 344 residues: Arginine N-succinyltransferase (344 aa).

Succinyl-CoA is bound at residue leucine 125. The Proton donor role is filled by histidine 229.

Belongs to the arginine N-succinyltransferase family.

It catalyses the reaction succinyl-CoA + L-arginine = N(2)-succinyl-L-arginine + CoA + H(+). The protein operates within amino-acid degradation; L-arginine degradation via AST pathway; L-glutamate and succinate from L-arginine: step 1/5. Its function is as follows. Catalyzes the transfer of succinyl-CoA to arginine to produce N(2)-succinylarginine. This is Arginine N-succinyltransferase from Escherichia coli O157:H7.